Reading from the N-terminus, the 255-residue chain is Methanethiol S-methyltransferase (255 aa).

5 helical membrane-spanning segments follow: residues 16-36 (FVLL…VYAV), 56-76 (LVTA…QHSV), 99-119 (YVLF…PIGI), 131-151 (IIFY…TFLI), and 191-211 (VGWF…LVFA).

The protein belongs to the nurim family.

It localises to the membrane. It catalyses the reaction methanethiol + S-adenosyl-L-methionine = dimethyl sulfide + S-adenosyl-L-homocysteine + H(+). Functionally, catalyzes the methylation of methanethiol (MeSH) to yield dimethylsulphide (DMS). The chain is Methanethiol S-methyltransferase from Crocosphaera subtropica (strain ATCC 51142 / BH68) (Cyanothece sp. (strain ATCC 51142)).